The chain runs to 339 residues: Aspartate carbamoyltransferase catalytic subunit (339 aa).

Carbamoyl phosphate contacts are provided by R60 and T61. K88 is an L-aspartate binding site. 3 residues coordinate carbamoyl phosphate: R110, H143, and Q146. Residues R183 and R254 each coordinate L-aspartate. Carbamoyl phosphate-binding residues include G295 and P296.

Belongs to the aspartate/ornithine carbamoyltransferase superfamily. ATCase family. In terms of assembly, heterododecamer (2C3:3R2) of six catalytic PyrB chains organized as two trimers (C3), and six regulatory PyrI chains organized as three dimers (R2).

It carries out the reaction carbamoyl phosphate + L-aspartate = N-carbamoyl-L-aspartate + phosphate + H(+). It participates in pyrimidine metabolism; UMP biosynthesis via de novo pathway; (S)-dihydroorotate from bicarbonate: step 2/3. Its function is as follows. Catalyzes the condensation of carbamoyl phosphate and aspartate to form carbamoyl aspartate and inorganic phosphate, the committed step in the de novo pyrimidine nucleotide biosynthesis pathway. The chain is Aspartate carbamoyltransferase catalytic subunit from Prochlorococcus marinus (strain MIT 9312).